Reading from the N-terminus, the 375-residue chain is Heat shock protein 42 (375 aa).

4 disordered regions span residues 21 to 59, 81 to 127, 154 to 238, and 347 to 375; these read TGQRGQQGYPRQPQRPQRYHPHYGQVHVGGHHPRHHPLY, SPEY…YYHC, PYEG…ETRM, and PKPKKRIAIEEIPDEELEFEENPNPTVEN. Residues 22–48 show a composition bias toward low complexity; that stretch reads GQRGQQGYPRQPQRPQRYHPHYGQVHV. Positions 49-58 are enriched in basic residues; that stretch reads GGHHPRHHPL. 2 stretches are compositionally biased toward acidic residues: residues 85 to 101 and 158 to 168; these read GYDDEDGEEEDQDEDMV and TEPEIEANTEQ. A compositionally biased stretch (basic and acidic residues) spans 169–197; that stretch reads EGEKGEEKDKKDKSEAPKEEAGETNKEKP. Residues S182, S213, S214, S215, and S223 each carry the phosphoserine modification. The 120-residue stretch at 237-356 folds into the sHSP domain; the sequence is RMDLPFSPEV…PKPKKRIAIE (120 aa). Positions 357–367 are enriched in acidic residues; sequence EIPDEELEFEE.

Belongs to the small heat shock protein (HSP20) family. As to quaternary structure, forms oligomeric complexes. Interacts with itself.

This is Heat shock protein 42 (HSP42) from Saccharomyces cerevisiae (strain ATCC 204508 / S288c) (Baker's yeast).